The following is an 85-amino-acid chain: Conotoxin Lt28.7 (85 aa).

Residues Met-1–Ala-21 form the signal peptide. The propeptide occupies Val-22–Glu-40.

It belongs to the conotoxin D superfamily. In terms of processing, contains 5 disulfide bonds. In terms of tissue distribution, expressed by the venom duct.

Its subcellular location is the secreted. Probable neurotoxin. The protein is Conotoxin Lt28.7 of Conus litteratus (Lettered cone).